Consider the following 230-residue polypeptide: Uracil-DNA glycosylase (230 aa).

Aspartate 65 serves as the catalytic Proton acceptor.

The protein belongs to the uracil-DNA glycosylase (UDG) superfamily. UNG family.

Its subcellular location is the cytoplasm. The enzyme catalyses Hydrolyzes single-stranded DNA or mismatched double-stranded DNA and polynucleotides, releasing free uracil.. Excises uracil residues from the DNA which can arise as a result of misincorporation of dUMP residues by DNA polymerase or due to deamination of cytosine. The sequence is that of Uracil-DNA glycosylase from Pediococcus pentosaceus (strain ATCC 25745 / CCUG 21536 / LMG 10740 / 183-1w).